A 1171-amino-acid chain; its full sequence is DExH-box ATP-dependent RNA helicase DExH15 chloroplastic (1171 aa).

The N-terminal 58 residues, 1-58 (MNTLPVVSLTASSSFKFFHFPSLHRSLSHSPNFSFTKSLILNPNHLSFKSTLNSLSPS), are a transit peptide targeting the chloroplast. Positions 53–62 (NSLSPSQSQL) are enriched in polar residues. Residues 53 to 111 (NSLSPSQSQLYEEEDDEEEEEEDEDDDDEAADEYDNISDEIRNSDDDDDDEETEFSVDL) are disordered. Acidic residues-rich tracts occupy residues 63 to 90 (YEEEDDEEEEEEDEDDDDEAADEYDNIS) and 97 to 107 (DDDDDDEETEF). Positions 163 to 327 (IEAFLRGSSV…WIGEIHGKTE (165 aa)) constitute a Helicase ATP-binding domain. 176–183 (APTSSGKT) contributes to the ATP binding site. A DEVH box motif is present at residues 275-278 (DEVH). In terms of domain architecture, Helicase C-terminal spans 424–620 (QISDTLWHLQ…ASYGMVLNLV (197 aa)).

It belongs to the DExH box helicase family.

Its subcellular location is the plastid. The protein localises to the chloroplast. The protein resides in the cytoplasmic granule. The catalysed reaction is ATP + H2O = ADP + phosphate + H(+). Functionally, RNA helicase involved in group II intron splicing. Essential protein required during embryogenesis. Involved in post-transcriptional gene silencing. Modulates the determination of cell fate. Necessary for normal plasmodesmata (PD) development and aperture regulation. The sequence is that of DExH-box ATP-dependent RNA helicase DExH15 chloroplastic (ISE2) from Arabidopsis thaliana (Mouse-ear cress).